The sequence spans 299 residues: Nitrogenase iron protein (299 aa).

11 to 18 (GKGGIGKS) lines the ATP pocket. [4Fe-4S] cluster is bound at residue Cys99. Position 102 is an ADP-ribosylarginine; by dinitrogenase reductase ADP-ribosyltransferase (Arg102). Cys133 contributes to the [4Fe-4S] cluster binding site.

It belongs to the NifH/BchL/ChlL family. In terms of assembly, homodimer. Requires [4Fe-4S] cluster as cofactor. Post-translationally, the reversible ADP-ribosylation of Arg-102 inactivates the nitrogenase reductase and regulates nitrogenase activity.

The catalysed reaction is N2 + 8 reduced [2Fe-2S]-[ferredoxin] + 16 ATP + 16 H2O = H2 + 8 oxidized [2Fe-2S]-[ferredoxin] + 2 NH4(+) + 16 ADP + 16 phosphate + 6 H(+). Functionally, the key enzymatic reactions in nitrogen fixation are catalyzed by the nitrogenase complex, which has 2 components: the iron protein and the molybdenum-iron protein. In Methylobacterium nodulans (strain LMG 21967 / CNCM I-2342 / ORS 2060), this protein is Nitrogenase iron protein.